A 163-amino-acid polypeptide reads, in one-letter code: Nucleotide-binding protein MS1759 (163 aa).

It belongs to the YajQ family.

In terms of biological role, nucleotide-binding protein. In Mannheimia succiniciproducens (strain KCTC 0769BP / MBEL55E), this protein is Nucleotide-binding protein MS1759.